The chain runs to 104 residues: Large ribosomal subunit protein bL21 (104 aa).

The protein belongs to the bacterial ribosomal protein bL21 family. In terms of assembly, part of the 50S ribosomal subunit. Contacts protein L20.

Its function is as follows. This protein binds to 23S rRNA in the presence of protein L20. This is Large ribosomal subunit protein bL21 from Helicobacter pylori (strain G27).